The primary structure comprises 583 residues: Undecaprenyl phosphate-alpha-4-amino-4-deoxy-L-arabinose arabinosyl transferase 2 (583 aa).

The segment at 1-20 (MTSRIQMHRTSPPPAYGTSA) is disordered. 12 helical membrane-spanning segments follow: residues 42–62 (LLLV…GLWI), 113–135 (LFGV…YLIT), 145–165 (SFAA…AGYS), 166–186 (NLDP…WFAL), 209–229 (FMTK…PYMI), 241–261 (GLVA…SIHA), 290–310 (WWFY…LLPG), 321–341 (QAPT…FSLS), 345–365 (LPTY…SALI), 380–400 (SLLN…IQLT), 409–429 (MLGL…NLLP), and 440–460 (PALG…GFIV).

The protein belongs to the glycosyltransferase 83 family.

Its subcellular location is the cell inner membrane. The catalysed reaction is 4-amino-4-deoxy-alpha-L-arabinopyranosyl di-trans,octa-cis-undecaprenyl phosphate + lipid IVA = lipid IIA + di-trans,octa-cis-undecaprenyl phosphate.. Its pathway is lipopolysaccharide metabolism; 4-amino-4-deoxy-beta-L-arabinose-lipid A biosynthesis. Catalyzes the transfer of the L-Ara4N moiety of the glycolipid undecaprenyl phosphate-alpha-L-Ara4N to lipid A. The modified arabinose is attached to lipid A and is required for resistance to polymyxin and cationic antimicrobial peptides. This chain is Undecaprenyl phosphate-alpha-4-amino-4-deoxy-L-arabinose arabinosyl transferase 2, found in Pseudomonas fluorescens (strain ATCC BAA-477 / NRRL B-23932 / Pf-5).